The sequence spans 278 residues: Ribosomal RNA small subunit methyltransferase A (278 aa).

6 residues coordinate S-adenosyl-L-methionine: N27, L29, G54, E75, D95, and N118.

This sequence belongs to the class I-like SAM-binding methyltransferase superfamily. rRNA adenine N(6)-methyltransferase family. RsmA subfamily.

The protein localises to the cytoplasm. The catalysed reaction is adenosine(1518)/adenosine(1519) in 16S rRNA + 4 S-adenosyl-L-methionine = N(6)-dimethyladenosine(1518)/N(6)-dimethyladenosine(1519) in 16S rRNA + 4 S-adenosyl-L-homocysteine + 4 H(+). In terms of biological role, specifically dimethylates two adjacent adenosines (A1518 and A1519) in the loop of a conserved hairpin near the 3'-end of 16S rRNA in the 30S particle. May play a critical role in biogenesis of 30S subunits. The polypeptide is Ribosomal RNA small subunit methyltransferase A (Chlamydia caviae (strain ATCC VR-813 / DSM 19441 / 03DC25 / GPIC) (Chlamydophila caviae)).